We begin with the raw amino-acid sequence, 212 residues long: Imidazole glycerol phosphate synthase subunit HisH (212 aa).

Positions Met-1–Ala-212 constitute a Glutamine amidotransferase type-1 domain. Cys-79 serves as the catalytic Nucleophile. Active-site residues include His-187 and Glu-189.

Heterodimer of HisH and HisF.

The protein resides in the cytoplasm. It carries out the reaction 5-[(5-phospho-1-deoxy-D-ribulos-1-ylimino)methylamino]-1-(5-phospho-beta-D-ribosyl)imidazole-4-carboxamide + L-glutamine = D-erythro-1-(imidazol-4-yl)glycerol 3-phosphate + 5-amino-1-(5-phospho-beta-D-ribosyl)imidazole-4-carboxamide + L-glutamate + H(+). The catalysed reaction is L-glutamine + H2O = L-glutamate + NH4(+). Its pathway is amino-acid biosynthesis; L-histidine biosynthesis; L-histidine from 5-phospho-alpha-D-ribose 1-diphosphate: step 5/9. Its function is as follows. IGPS catalyzes the conversion of PRFAR and glutamine to IGP, AICAR and glutamate. The HisH subunit catalyzes the hydrolysis of glutamine to glutamate and ammonia as part of the synthesis of IGP and AICAR. The resulting ammonia molecule is channeled to the active site of HisF. The sequence is that of Imidazole glycerol phosphate synthase subunit HisH from Nitratidesulfovibrio vulgaris (strain DSM 19637 / Miyazaki F) (Desulfovibrio vulgaris).